The following is a 181-amino-acid chain: MQGQGALKESHIHLPTEQPEASLVLQGQLAESSALGPKGALRPQAQSPDVPVSWWQGSGKRLSHRLPHICSQPPLGPFLPLTWPSCGFFGLGGAASASLGLEVLQDSVSTWARGPCCPVHPQSLTVVCMCACMCVCVHVCACVYVCMCVLVCMCACACMRAHRYFLMDCAGICSPHGPGTQ.

The chain crosses the membrane as a helical span at residues 133–153 (MCVCVHVCACVYVCMCVLVCM).

It is found in the membrane. This is an uncharacterized protein from Homo sapiens (Human).